A 482-amino-acid chain; its full sequence is tRNA sulfurtransferase (482 aa).

One can recognise a THUMP domain in the interval 61–165 (LAIRDALTRI…DDRLLLIKGR (105 aa)). ATP is bound by residues 183–184 (LI), Lys-265, Gly-287, and Gln-296. A disulfide bridge links Cys-344 with Cys-456. A Rhodanese domain is found at 404 to 482 (FGPNDVILDI…GFNNVKVYRP (79 aa)). Cys-456 functions as the Cysteine persulfide intermediate in the catalytic mechanism.

Belongs to the ThiI family.

The protein localises to the cytoplasm. The catalysed reaction is [ThiI sulfur-carrier protein]-S-sulfanyl-L-cysteine + a uridine in tRNA + 2 reduced [2Fe-2S]-[ferredoxin] + ATP + H(+) = [ThiI sulfur-carrier protein]-L-cysteine + a 4-thiouridine in tRNA + 2 oxidized [2Fe-2S]-[ferredoxin] + AMP + diphosphate. It catalyses the reaction [ThiS sulfur-carrier protein]-C-terminal Gly-Gly-AMP + S-sulfanyl-L-cysteinyl-[cysteine desulfurase] + AH2 = [ThiS sulfur-carrier protein]-C-terminal-Gly-aminoethanethioate + L-cysteinyl-[cysteine desulfurase] + A + AMP + 2 H(+). The protein operates within cofactor biosynthesis; thiamine diphosphate biosynthesis. Functionally, catalyzes the ATP-dependent transfer of a sulfur to tRNA to produce 4-thiouridine in position 8 of tRNAs, which functions as a near-UV photosensor. Also catalyzes the transfer of sulfur to the sulfur carrier protein ThiS, forming ThiS-thiocarboxylate. This is a step in the synthesis of thiazole, in the thiamine biosynthesis pathway. The sulfur is donated as persulfide by IscS. The polypeptide is tRNA sulfurtransferase (Escherichia coli O45:K1 (strain S88 / ExPEC)).